The following is a 504-amino-acid chain: Maturase K (504 aa).

This sequence belongs to the intron maturase 2 family. MatK subfamily.

It localises to the plastid. It is found in the chloroplast. Its function is as follows. Usually encoded in the trnK tRNA gene intron. Probably assists in splicing its own and other chloroplast group II introns. The chain is Maturase K from Ochroma pyramidale (Balsa).